The chain runs to 73 residues: Sec-independent protein translocase protein TatA (73 aa).

A helical transmembrane segment spans residues 1 to 21; that stretch reads MGSFSIWHWLIVLVIVMLVFG. The segment at 50–73 is disordered; the sequence is KEQIQQSSATAEKTVDVQAKDVNK. A compositionally biased stretch (basic and acidic residues) spans 62 to 73; that stretch reads KTVDVQAKDVNK.

Belongs to the TatA/E family. In terms of assembly, the Tat system comprises two distinct complexes: a TatABC complex, containing multiple copies of TatA, TatB and TatC subunits, and a separate TatA complex, containing only TatA subunits. Substrates initially bind to the TatABC complex, which probably triggers association of the separate TatA complex to form the active translocon.

Its subcellular location is the cell inner membrane. Functionally, part of the twin-arginine translocation (Tat) system that transports large folded proteins containing a characteristic twin-arginine motif in their signal peptide across membranes. TatA could form the protein-conducting channel of the Tat system. The polypeptide is Sec-independent protein translocase protein TatA (Polynucleobacter necessarius subsp. necessarius (strain STIR1)).